Consider the following 787-residue polypeptide: MSSKQATSPFACAADGEDAMTQDLTSREKEEGSDQHVASHLPLHPIMHNKPHSEELPTLVNTIQQDADWDSVLSSQQRMESENNKLCSLYSFRNTSTSPHKPDEGSRDREIMTSVTFGTPERRKGSLADVVDTLKQKKLEEMTRTEQEDPSCMEKLLSKDWKEKMERLNTSELLGEIKGTPESLAEKERQLSTMITQLISLREQLLAAHDEQKKLAASQIEKQRQQMDLARQQQEQIARQQQQLLQQQHKINLLQQQIQVQGHMPPLMIPIFPHDQRTLAAAAAAQQGFLFPPGITYKPGDNYPVQFIPSTMAAAAASGLSPLQLQQLYAAQLASMQVSPGAKMPSTPQPPNTAGTVSPTGIKNEKRGTSPVTQVKDEAAAQPLNLSSRPKTAEPVKSPTSPTQNLFPASKTSPVNLPNKSSIPSPIGGSLGRGSSLDILSSLNSPALFGDQDTVMKAIQEARKMREQIQREQQQQQPHGVDGKLSSINNMGLNNCRNEKERTRFENLGPQLTGKSNEDGKLGPGVIDLTRPEDAEGSKAMNGSAAKLQQYYCWPTGGATVAEARVYRDARGRASSEPHIKRPMNAFMVWAKDERRKILQAFPDMHNSNISKILGSRWKSMSNQEKQPYYEEQARLSKIHLEKYPNYKYKPRPKRTCIVDGKKLRIGEYKQLMRSRRQEMRQFFTVGQQPQIPITTGTGVVYPGAITMATTTPSPQMTSDCSSTSASPEPSLPVIQSTYGMKTDGGSLAGNEMINGEDEMEMYDDYEDDPKSDYSSENEAPEAVSAN.

Residues 1–46 (MSSKQATSPFACAADGEDAMTQDLTSREKEEGSDQHVASHLPLHPI) form a disordered region. Over residues 25–34 (TSREKEEGSD) the composition is skewed to basic and acidic residues. A Phosphothreonine modification is found at Thr-119. The stretch at 184-262 (LAEKERQLST…LLQQQIQVQG (79 aa)) forms a coiled coil. A disordered region spans residues 340-429 (PGAKMPSTPQ…KSSIPSPIGG (90 aa)). The segment covering 352–361 (NTAGTVSPTG) has biased composition (polar residues). Phosphoserine is present on Ser-358. Thr-360 is modified (phosphothreonine). Glycyl lysine isopeptide (Lys-Gly) (interchain with G-Cter in SUMO) cross-links involve residues Lys-363 and Lys-376. Phosphoserine is present on residues Ser-398 and Ser-401. Residues 398-420 (SPTSPTQNLFPASKTSPVNLPNK) are compositionally biased toward polar residues. The HMG box DNA-binding region spans 580-648 (IKRPMNAFMV…IHLEKYPNYK (69 aa)). Positions 712–740 (TPSPQMTSDCSSTSASPEPSLPVIQSTYG) are enriched in polar residues. The segment at 712–787 (TPSPQMTSDC…NEAPEAVSAN (76 aa)) is disordered. The segment covering 755 to 768 (NGEDEMEMYDDYED) has biased composition (acidic residues).

Homodimer. Interacts with DAZAP2. May interact with CENPK. Sumoylation inhibits the transcriptional activity.

The protein resides in the nucleus. The protein localises to the cytoplasm. In terms of biological role, transcription factor that plays a key role in several developmental processes, including neurogenesis, chondrocytes differentiation and cartilage formation. Specifically binds the 5'-AACAAT-3' DNA motif present in enhancers and super-enhancers and promotes expression of genes important for chondrogenesis. Required for overt chondrogenesis when condensed prechondrocytes differentiate into early stage chondrocytes: SOX5 and SOX6 cooperatively bind with SOX9 on active enhancers and super-enhancers associated with cartilage-specific genes, and thereby potentiate SOX9's ability to transactivate. Not involved in precartilaginous condensation, the first step in chondrogenesis, during which skeletal progenitors differentiate into prechondrocytes. Together with SOX5, required to form and maintain a pool of highly proliferating chondroblasts between epiphyses and metaphyses, to form columnar chondroblasts, delay chondrocyte prehypertrophy but promote hypertrophy, and to delay terminal differentiation of chondrocytes on contact with ossification fronts. Binds to the proximal promoter region of the myelin protein MPZ gene, and is thereby involved in the differentiation of oligodendroglia in the developing spinal tube. Binds to the gene promoter of MBP and acts as a transcriptional repressor. This is Transcription factor SOX-6 from Pongo abelii (Sumatran orangutan).